The primary structure comprises 266 residues: Ras-like protein family member 12 (266 aa).

GTP-binding positions include 27-34 (GRRGAGKS), 74-78 (DTADL), and 134-137 (NKLD).

Belongs to the small GTPase superfamily. Ras family.

It carries out the reaction GTP + H2O = GDP + phosphate + H(+). This Homo sapiens (Human) protein is Ras-like protein family member 12 (RASL12).